The chain runs to 157 residues: MATMHDKITLQLPAKPEYVSLGRLSLSGIASRAGFSYEAIEDLKIAVSEAITNSVKHAFKGEDDGEITVEYLIYEDKLEVRVSDNGTSFDLETRKQEIGPYEVGEDAEMMRIGGLGLFLIETLMDDVKLYYDEGVSVVMTKYINEKQVEENAKSIST.

This sequence belongs to the anti-sigma-factor family.

The enzyme catalyses L-seryl-[protein] + ATP = O-phospho-L-seryl-[protein] + ADP + H(+). It catalyses the reaction L-threonyl-[protein] + ATP = O-phospho-L-threonyl-[protein] + ADP + H(+). In terms of biological role, negative regulator of sigma-B activity. Phosphorylates and inactivates its specific antagonist protein, RsbV. Upon phosphorylation of RsbV, RsbW is released and binds to sigma-B, thereby blocking its ability to form an RNA polymerase holoenzyme (E-sigma-B). This Listeria monocytogenes serotype 4b (strain CLIP80459) protein is Serine-protein kinase RsbW.